Reading from the N-terminus, the 282-residue chain is Large ribosomal subunit protein uL2c (282 aa).

Residues serine 230–leucine 261 form a disordered region.

This sequence belongs to the universal ribosomal protein uL2 family. Part of the 50S ribosomal subunit.

Its subcellular location is the plastid. This chain is Large ribosomal subunit protein uL2c (rpl2), found in Helicosporidium sp. subsp. Simulium jonesii (Green alga).